The following is a 219-amino-acid chain: Ion-translocating oxidoreductase complex subunit G (219 aa).

Residues 25-45 form a helical membrane-spanning segment; sequence GLLLGLFSLVSALMLALASDA. Position 187 is an FMN phosphoryl threonine (Thr-187).

It belongs to the RnfG family. In terms of assembly, the complex is composed of six subunits: RnfA, RnfB, RnfC, RnfD, RnfE and RnfG. Requires FMN as cofactor.

It localises to the cellular chromatophore membrane. Functionally, part of a membrane-bound complex that couples electron transfer with translocation of ions across the membrane. This chain is Ion-translocating oxidoreductase complex subunit G, found in Cereibacter sphaeroides (strain ATCC 17029 / ATH 2.4.9) (Rhodobacter sphaeroides).